A 318-amino-acid chain; its full sequence is tRNA-modifying protein YgfZ (318 aa).

Folate-binding residues include tryptophan 28 and tryptophan 182.

This sequence belongs to the tRNA-modifying YgfZ family.

The protein resides in the cytoplasm. Folate-binding protein involved in regulating the level of ATP-DnaA and in the modification of some tRNAs. It is probably a key factor in regulatory networks that act via tRNA modification, such as initiation of chromosomal replication. The polypeptide is tRNA-modifying protein YgfZ (Aliivibrio fischeri (strain MJ11) (Vibrio fischeri)).